Reading from the N-terminus, the 229-residue chain is Dihydrofolate reductase (229 aa).

The DHFR domain maps to 11 to 227; it reads SITAVVAATA…VKYIFEMWVL (217 aa). Residues Ala-17 and 23–29 contribute to the NADP(+) site; that span reads GIGLNGG. 37–42 serves as a coordination point for substrate; it reads EMKYFA. Position 64–66 (64–66) interacts with NADP(+); it reads RKT. Position 80 (Arg-80) interacts with substrate. NADP(+)-binding positions include 86-88 and 127-134; these read SGK and GGATLYTS.

It belongs to the dihydrofolate reductase family. In terms of assembly, monomer.

It carries out the reaction (6S)-5,6,7,8-tetrahydrofolate + NADP(+) = 7,8-dihydrofolate + NADPH + H(+). Its pathway is cofactor biosynthesis; tetrahydrofolate biosynthesis; 5,6,7,8-tetrahydrofolate from 7,8-dihydrofolate: step 1/1. Its function is as follows. Key enzyme in folate metabolism. Catalyzes an essential reaction for de novo glycine and purine synthesis, and for DNA precursor synthesis. The sequence is that of Dihydrofolate reductase (DFR1) from Cryptococcus neoformans var. neoformans serotype D (strain JEC21 / ATCC MYA-565) (Filobasidiella neoformans).